Here is a 342-residue protein sequence, read N- to C-terminus: N-acetyl-gamma-glutamyl-phosphate reductase (342 aa).

Cys-149 is a catalytic residue.

It belongs to the NAGSA dehydrogenase family. Type 1 subfamily.

Its subcellular location is the cytoplasm. It carries out the reaction N-acetyl-L-glutamate 5-semialdehyde + phosphate + NADP(+) = N-acetyl-L-glutamyl 5-phosphate + NADPH + H(+). It functions in the pathway amino-acid biosynthesis; L-arginine biosynthesis; N(2)-acetyl-L-ornithine from L-glutamate: step 3/4. Its function is as follows. Catalyzes the NADPH-dependent reduction of N-acetyl-5-glutamyl phosphate to yield N-acetyl-L-glutamate 5-semialdehyde. The chain is N-acetyl-gamma-glutamyl-phosphate reductase from Laribacter hongkongensis (strain HLHK9).